The sequence spans 361 residues: Chorismate synthase (361 aa).

2 residues coordinate NADP(+): arginine 48 and arginine 54. FMN contacts are provided by residues 131-133 (RSS), 243-244 (NA), glycine 287, 302-306 (KPTSS), and arginine 328.

It belongs to the chorismate synthase family. Homotetramer. It depends on FMNH2 as a cofactor.

It carries out the reaction 5-O-(1-carboxyvinyl)-3-phosphoshikimate = chorismate + phosphate. The protein operates within metabolic intermediate biosynthesis; chorismate biosynthesis; chorismate from D-erythrose 4-phosphate and phosphoenolpyruvate: step 7/7. Its function is as follows. Catalyzes the anti-1,4-elimination of the C-3 phosphate and the C-6 proR hydrogen from 5-enolpyruvylshikimate-3-phosphate (EPSP) to yield chorismate, which is the branch point compound that serves as the starting substrate for the three terminal pathways of aromatic amino acid biosynthesis. This reaction introduces a second double bond into the aromatic ring system. This chain is Chorismate synthase, found in Rhodopseudomonas palustris (strain BisA53).